A 117-amino-acid chain; its full sequence is Large ribosomal subunit protein bL20 (117 aa).

The protein belongs to the bacterial ribosomal protein bL20 family.

Binds directly to 23S ribosomal RNA and is necessary for the in vitro assembly process of the 50S ribosomal subunit. It is not involved in the protein synthesizing functions of that subunit. The protein is Large ribosomal subunit protein bL20 of Rickettsia rickettsii (strain Iowa).